A 493-amino-acid chain; its full sequence is Ketol-acid reductoisomerase (NADP(+)) (493 aa).

Positions Leu-14–Ser-208 constitute a KARI N-terminal Rossmann domain. NADP(+) contacts are provided by residues Cys-45 to Gln-48, Arg-68, Arg-76, Ser-78, and Asp-108 to Gln-110. The active site involves His-132. Gly-158 contributes to the NADP(+) binding site. 2 KARI C-terminal knotted domains span residues Ser-209–Ala-345 and Asp-346–Met-486. Mg(2+) contacts are provided by Asp-217, Glu-221, Glu-390, and Glu-394. A substrate-binding site is contributed by Ser-415.

The protein belongs to the ketol-acid reductoisomerase family. Mg(2+) serves as cofactor.

It catalyses the reaction (2R)-2,3-dihydroxy-3-methylbutanoate + NADP(+) = (2S)-2-acetolactate + NADPH + H(+). The enzyme catalyses (2R,3R)-2,3-dihydroxy-3-methylpentanoate + NADP(+) = (S)-2-ethyl-2-hydroxy-3-oxobutanoate + NADPH + H(+). It functions in the pathway amino-acid biosynthesis; L-isoleucine biosynthesis; L-isoleucine from 2-oxobutanoate: step 2/4. Its pathway is amino-acid biosynthesis; L-valine biosynthesis; L-valine from pyruvate: step 2/4. Involved in the biosynthesis of branched-chain amino acids (BCAA). Catalyzes an alkyl-migration followed by a ketol-acid reduction of (S)-2-acetolactate (S2AL) to yield (R)-2,3-dihydroxy-isovalerate. In the isomerase reaction, S2AL is rearranged via a Mg-dependent methyl migration to produce 3-hydroxy-3-methyl-2-ketobutyrate (HMKB). In the reductase reaction, this 2-ketoacid undergoes a metal-dependent reduction by NADPH to yield (R)-2,3-dihydroxy-isovalerate. The sequence is that of Ketol-acid reductoisomerase (NADP(+)) from Actinobacillus succinogenes (strain ATCC 55618 / DSM 22257 / CCUG 43843 / 130Z).